The primary structure comprises 733 residues: MPEQSSIPTIPTLSDAYTYALDAWQRSILFLDVMRQRGAQYEEHTAQTAPNVLDYEAELVCDGRKLDRPVNYALVRIVPPAGAVIDPLKKPFVVVDPRAGHGPGIGGFKADSEIGVAIKAGHACYFIGFLPEPVPGQTIEDITRSEAIFLETVIARHPDADGKPCVIGNCQAGWAVMILASLRPELFGPIIIAGAPLSYWAGIRGQYPMRYSGGLLGGSWLTALTGDLGAGIFDGAWLVQNFENQNPANTLWTKQYNLYSKVDTEAGRYLGFERWWGGHVRLNAEEMQFIVDELFVGNKLAAGKIQTSDGTTIDMRNIRSPIVVFCSKGDNITPPAQALDWILDLHDSVDEIRAHGQTIVYTVHEKIGHLGIFVSAGVARKEHDEFASNIDLIDVLPPGLYEAVLEPVGPAVENPDLVSGEWIMRCEARTLDDIRAFGGNDLEDDRRFAAAARVSEINLALYRTYLQPWIKGMVTPPMAEAMRSMHPLRLQYEVFGPGNPVMAWVEAAAGLIRDARQPVAPDNPLLALQENMSRQVVDGLEAWRQMVEHLSEQKFREIYGAPALQAALGIDTQTDRPPRQAAKNCWHHALLENKIAALKADMAKGGIREALARALLFVGMARGRVDERGFEAVRRLRRAHPSAKQLTLAEFKALMRTQYFMLLVDEEAALAAIPKLLPEKIEERGAAFAALREVLEAPGLLTGIAAERLQSVKALFGLSGEAPVPLMVRKVAR.

The helical transmembrane segment at 174–194 threads the bilayer; sequence WAVMILASLRPELFGPIIIAG.

It is found in the membrane. This is an uncharacterized protein from Rhizobium meliloti (Ensifer meliloti).